Consider the following 355-residue polypeptide: Type II restriction enzyme CfrBI (355 aa).

The enzyme catalyses Endonucleolytic cleavage of DNA to give specific double-stranded fragments with terminal 5'-phosphates.. In terms of biological role, a P subtype restriction enzyme that recognizes the double-stranded sequence 5'-CCWWGG-3' and cleaves after C-1. This chain is Type II restriction enzyme CfrBI, found in Citrobacter freundii.